Reading from the N-terminus, the 306-residue chain is UDP-3-O-acyl-N-acetylglucosamine deacetylase (306 aa).

Residues H79, H238, and D242 each coordinate Zn(2+). Residue H265 is the Proton donor of the active site.

This sequence belongs to the LpxC family. Requires Zn(2+) as cofactor.

It catalyses the reaction a UDP-3-O-[(3R)-3-hydroxyacyl]-N-acetyl-alpha-D-glucosamine + H2O = a UDP-3-O-[(3R)-3-hydroxyacyl]-alpha-D-glucosamine + acetate. It participates in glycolipid biosynthesis; lipid IV(A) biosynthesis; lipid IV(A) from (3R)-3-hydroxytetradecanoyl-[acyl-carrier-protein] and UDP-N-acetyl-alpha-D-glucosamine: step 2/6. Functionally, catalyzes the hydrolysis of UDP-3-O-myristoyl-N-acetylglucosamine to form UDP-3-O-myristoylglucosamine and acetate, the committed step in lipid A biosynthesis. The protein is UDP-3-O-acyl-N-acetylglucosamine deacetylase of Shewanella sp. (strain ANA-3).